The chain runs to 233 residues: Large ribosomal subunit protein uL1 (233 aa).

This sequence belongs to the universal ribosomal protein uL1 family. Part of the 50S ribosomal subunit.

Its function is as follows. Binds directly to 23S rRNA. The L1 stalk is quite mobile in the ribosome, and is involved in E site tRNA release. Functionally, protein L1 is also a translational repressor protein, it controls the translation of the L11 operon by binding to its mRNA. This chain is Large ribosomal subunit protein uL1, found in Shewanella frigidimarina (strain NCIMB 400).